The following is a 247-amino-acid chain: F-box and leucine-rich protein 22 (247 aa).

The F-box domain occupies 6 to 52 (TMHITQLNRECLLHLFSFLDKDSRKSLARTCSQLHDVFEDPALWSLL). Disordered regions lie at residues 124–154 (SPRRREAPAPSSGTPIAVGPKSPRWGGPDHS) and 173–247 (GLGS…AFPQ). Over residues 184–200 (ETPPAPGVSWGPPPPGA) the composition is skewed to pro residues.

In terms of assembly, directly interacts with SKP1 and CUL1. In terms of tissue distribution, enriched in cardiac muscle.

The protein localises to the cytoplasm. The protein resides in the myofibril. Its subcellular location is the sarcomere. It is found in the z line. Its pathway is protein modification; protein ubiquitination. In terms of biological role, substrate-recognition component of the SCF (SKP1-CUL1-F-box protein)-type E3 ubiquitin ligase complex. Promotes ubiquitination of sarcomeric proteins alpha-actinin-2 (ACTN2) and filamin-C (FLNC). This is F-box and leucine-rich protein 22 (FBXL22) from Homo sapiens (Human).